The sequence spans 446 residues: Nuclear distribution protein nudF (446 aa).

The region spanning 9–41 is the LisH domain; it reads QAEELHKSMVAYLSSIKASQSSNTLREELGIGD. A coiled-coil region spans residues 60–86; that stretch reads TGIARLQRKILDLESKITSLQAELDSV. 8 WD repeats span residues 113–154, 156–196, 200–240, 243–282, 285–345, 347–386, 391–430, and 432–446; these read SHRD…RTLK, HMRG…ANIR, GHDH…CVRT, SNSIWFLDVSPSFDGKWLVAGGRDQAVTVWEVSSAEPRAA, GHDN…IKTL, GHDNWIRGLVFHPSGKYLFSVSDDKTIRCWDLSQEGRLVK, AHGHFISCIRWAPPPRNAAAEASETTNGVSKKAPTKPAFQ, and VIATGSADSCVRVFK.

This sequence belongs to the WD repeat LIS1/nudF family. As to quaternary structure, self-associates. Interacts with nudE and dynein.

The protein resides in the cytoplasm. Its subcellular location is the cytoskeleton. The protein localises to the spindle pole. Positively regulates the activity of the minus-end directed microtubule motor protein dynein. May enhance dynein-mediated microtubule sliding by targeting dynein to the microtubule plus end. Required for nuclear migration during vegetative growth as well as development. Required for retrograde early endosome (EE) transport from the hyphal tip. Required for localization of dynein to the mitotic spindle poles. Recruits additional proteins to the dynein complex at SPBs. The polypeptide is Nuclear distribution protein nudF (Aspergillus terreus (strain NIH 2624 / FGSC A1156)).